Here is a 177-residue protein sequence, read N- to C-terminus: RNA pyrophosphohydrolase (177 aa).

Positions 6–149 (GYRPNVGIVI…KRDVYRRVMK (144 aa)) constitute a Nudix hydrolase domain. Positions 38–59 (GGINPGESAEQAMYRELFEEVG) match the Nudix box motif.

The protein belongs to the Nudix hydrolase family. RppH subfamily. Requires a divalent metal cation as cofactor.

Accelerates the degradation of transcripts by removing pyrophosphate from the 5'-end of triphosphorylated RNA, leading to a more labile monophosphorylated state that can stimulate subsequent ribonuclease cleavage. This chain is RNA pyrophosphohydrolase, found in Pectobacterium carotovorum subsp. carotovorum (strain PC1).